A 244-amino-acid chain; its full sequence is Uridylate kinase (244 aa).

Residue 12–15 (KLSG) coordinates ATP. The segment at 20 to 25 (GERGVG) is involved in allosteric activation by GTP. G54 lines the UMP pocket. G55 and R59 together coordinate ATP. UMP-binding positions include D74 and 135-142 (IGSPYFST). Residues N163, Y169, and D172 each contribute to the ATP site.

The protein belongs to the UMP kinase family. In terms of assembly, homohexamer.

The protein resides in the cytoplasm. The catalysed reaction is UMP + ATP = UDP + ADP. Its pathway is pyrimidine metabolism; CTP biosynthesis via de novo pathway; UDP from UMP (UMPK route): step 1/1. With respect to regulation, allosterically activated by GTP. Inhibited by UTP. Functionally, catalyzes the reversible phosphorylation of UMP to UDP. The sequence is that of Uridylate kinase from Streptococcus suis (strain 98HAH33).